Reading from the N-terminus, the 274-residue chain is Ribosomal RNA small subunit methyltransferase A (274 aa).

Asn-28, Leu-30, Gly-55, Glu-77, Asp-103, and Asn-122 together coordinate S-adenosyl-L-methionine.

It belongs to the class I-like SAM-binding methyltransferase superfamily. rRNA adenine N(6)-methyltransferase family. RsmA subfamily.

The protein resides in the cytoplasm. The catalysed reaction is adenosine(1518)/adenosine(1519) in 16S rRNA + 4 S-adenosyl-L-methionine = N(6)-dimethyladenosine(1518)/N(6)-dimethyladenosine(1519) in 16S rRNA + 4 S-adenosyl-L-homocysteine + 4 H(+). Functionally, specifically dimethylates two adjacent adenosines (A1518 and A1519) in the loop of a conserved hairpin near the 3'-end of 16S rRNA in the 30S particle. May play a critical role in biogenesis of 30S subunits. The sequence is that of Ribosomal RNA small subunit methyltransferase A from Sinorhizobium medicae (strain WSM419) (Ensifer medicae).